The sequence spans 71 residues: uncharacterized protein (71 aa).

The first 23 residues, 1–23, serve as a signal peptide directing secretion; that stretch reads MTLLIILILKYLLCLENLKNISL. N-linked (GlcNAc...) asparagine glycosylation is found at N20, N28, N44, and N50.

It is found in the secreted. This is an uncharacterized protein from Dictyostelium discoideum (Social amoeba).